The sequence spans 383 residues: Succinyl-diaminopimelate desuccinylase (383 aa).

Zn(2+) is bound at residue histidine 73. The active site involves aspartate 75. Aspartate 107 lines the Zn(2+) pocket. Residue glutamate 141 is the Proton acceptor of the active site. 3 residues coordinate Zn(2+): glutamate 142, glutamate 170, and histidine 356.

Belongs to the peptidase M20A family. DapE subfamily. Homodimer. Zn(2+) serves as cofactor. Requires Co(2+) as cofactor.

The enzyme catalyses N-succinyl-(2S,6S)-2,6-diaminopimelate + H2O = (2S,6S)-2,6-diaminopimelate + succinate. It functions in the pathway amino-acid biosynthesis; L-lysine biosynthesis via DAP pathway; LL-2,6-diaminopimelate from (S)-tetrahydrodipicolinate (succinylase route): step 3/3. Catalyzes the hydrolysis of N-succinyl-L,L-diaminopimelic acid (SDAP), forming succinate and LL-2,6-diaminopimelate (DAP), an intermediate involved in the bacterial biosynthesis of lysine and meso-diaminopimelic acid, an essential component of bacterial cell walls. The sequence is that of Succinyl-diaminopimelate desuccinylase from Pseudomonas putida (strain ATCC 700007 / DSM 6899 / JCM 31910 / BCRC 17059 / LMG 24140 / F1).